A 365-amino-acid chain; its full sequence is MIYNFGAGPSVLPKEVLKKVQEELLDFEKSGMSVMEISHRSKAFQKVIDEAENDLRDLMSIPQNYKILFLQGGASSQFSMVPMNLAIGKKAYYNISGAFGEKAYDEAVKLSHFLDLMAISLGSTKKDNYNHLLKIDKSKIDEKNGAYLHLTTNNTIEGTSIFPENLPEFASLPLVADMSSNILAVDYDVSKFGLIYAGAQKNLGIAGLTIVIIREDLLNEAESLSSMMDYQILVENGSMYNTPPTFAIYVAGLVFKWVKAQGGVKKLEEMNQRKAQLLYDLIDQSDFYQNPIKNKDERSICNVVFTSPSQELDELFTQKAEEKGFKSLKGHRSVGGMRASIYNAFPLEGVVELVKFMKEFEEGYK.

Arg40 contacts L-glutamate. Pyridoxal 5'-phosphate is bound by residues 74 to 75 (AS), Phe99, Thr155, Asp177, and Gln200. N6-(pyridoxal phosphate)lysine is present on Lys201. Residue 241 to 242 (NT) coordinates pyridoxal 5'-phosphate.

Belongs to the class-V pyridoxal-phosphate-dependent aminotransferase family. SerC subfamily. As to quaternary structure, homodimer. Pyridoxal 5'-phosphate serves as cofactor.

It is found in the cytoplasm. It catalyses the reaction O-phospho-L-serine + 2-oxoglutarate = 3-phosphooxypyruvate + L-glutamate. The enzyme catalyses 4-(phosphooxy)-L-threonine + 2-oxoglutarate = (R)-3-hydroxy-2-oxo-4-phosphooxybutanoate + L-glutamate. The protein operates within amino-acid biosynthesis; L-serine biosynthesis; L-serine from 3-phospho-D-glycerate: step 2/3. Its function is as follows. Catalyzes the reversible conversion of 3-phosphohydroxypyruvate to phosphoserine and of 3-hydroxy-2-oxo-4-phosphonooxybutanoate to phosphohydroxythreonine. The polypeptide is Phosphoserine aminotransferase (Lactococcus lactis subsp. lactis (strain IL1403) (Streptococcus lactis)).